The chain runs to 292 residues: Phosphatidylserine decarboxylase proenzyme (292 aa).

Residues aspartate 89, histidine 146, and serine 252 each act as charge relay system; for autoendoproteolytic cleavage activity in the active site. The Schiff-base intermediate with substrate; via pyruvic acid; for decarboxylase activity role is filled by serine 252. The residue at position 252 (serine 252) is a Pyruvic acid (Ser); by autocatalysis.

The protein belongs to the phosphatidylserine decarboxylase family. PSD-B subfamily. Prokaryotic type I sub-subfamily. As to quaternary structure, heterodimer of a large membrane-associated beta subunit and a small pyruvoyl-containing alpha subunit. Pyruvate serves as cofactor. In terms of processing, is synthesized initially as an inactive proenzyme. Formation of the active enzyme involves a self-maturation process in which the active site pyruvoyl group is generated from an internal serine residue via an autocatalytic post-translational modification. Two non-identical subunits are generated from the proenzyme in this reaction, and the pyruvate is formed at the N-terminus of the alpha chain, which is derived from the carboxyl end of the proenzyme. The autoendoproteolytic cleavage occurs by a canonical serine protease mechanism, in which the side chain hydroxyl group of the serine supplies its oxygen atom to form the C-terminus of the beta chain, while the remainder of the serine residue undergoes an oxidative deamination to produce ammonia and the pyruvoyl prosthetic group on the alpha chain. During this reaction, the Ser that is part of the protease active site of the proenzyme becomes the pyruvoyl prosthetic group, which constitutes an essential element of the active site of the mature decarboxylase.

The protein localises to the cell membrane. It carries out the reaction a 1,2-diacyl-sn-glycero-3-phospho-L-serine + H(+) = a 1,2-diacyl-sn-glycero-3-phosphoethanolamine + CO2. It functions in the pathway phospholipid metabolism; phosphatidylethanolamine biosynthesis; phosphatidylethanolamine from CDP-diacylglycerol: step 2/2. Its function is as follows. Catalyzes the formation of phosphatidylethanolamine (PtdEtn) from phosphatidylserine (PtdSer). This Shewanella sp. (strain MR-7) protein is Phosphatidylserine decarboxylase proenzyme.